The chain runs to 562 residues: Phosphoacetylglucosamine mutase (562 aa).

Ser-74 (phosphoserine intermediate) is an active-site residue. Mg(2+)-binding residues include Ser-74, Asp-291, Asp-293, and Asp-295. Substrate is bound by residues Glu-395–Asn-397, Arg-526–Thr-530, and Arg-535.

It belongs to the phosphohexose mutase family. The cofactor is Mg(2+).

The enzyme catalyses N-acetyl-alpha-D-glucosamine 1-phosphate = N-acetyl-D-glucosamine 6-phosphate. It participates in nucleotide-sugar biosynthesis; UDP-N-acetyl-alpha-D-glucosamine biosynthesis; N-acetyl-alpha-D-glucosamine 1-phosphate from alpha-D-glucosamine 6-phosphate (route I): step 2/2. In terms of biological role, interconverts GlcNAc-6-P and GlcNAc-1-P. The sequence is that of Phosphoacetylglucosamine mutase from Oryza sativa subsp. japonica (Rice).